The following is a 612-amino-acid chain: Phosphoenolpyruvate carboxykinase [GTP] (612 aa).

Substrate-binding positions include Arg82 and 221 to 223 (YGG). The Mn(2+) site is built by Lys230 and His250. Ser272 contributes to the substrate binding site. 273–278 (ACGKTN) lines the GTP pocket. The active site involves Cys274. Asp297 serves as a coordination point for Mn(2+). 388–390 (NSR) provides a ligand contact to substrate. GTP is bound by residues Arg390, Arg421, and 516 to 519 (FGEN).

Belongs to the phosphoenolpyruvate carboxykinase [GTP] family. In terms of assembly, monomer. Mn(2+) is required as a cofactor.

The protein localises to the cytoplasm. It carries out the reaction oxaloacetate + GTP = phosphoenolpyruvate + GDP + CO2. The protein operates within carbohydrate biosynthesis; gluconeogenesis. In terms of biological role, catalyzes the conversion of oxaloacetate (OAA) to phosphoenolpyruvate (PEP), the rate-limiting step in the metabolic pathway that produces glucose from lactate and other precursors derived from the citric acid cycle. This chain is Phosphoenolpyruvate carboxykinase [GTP], found in Corynebacterium efficiens (strain DSM 44549 / YS-314 / AJ 12310 / JCM 11189 / NBRC 100395).